The sequence spans 624 residues: MSDGDILRSTFPSYMAEGERLYLCGEFTKAIQSFTNALHLQSGDKNCLVARSKCYLKMGDLEKSLNDAEASLRNDPTFCKGILQKAETLYTMGDFEFALVFYHRGYKLRPDREFKVGIQKAQEAINNSVGSPSSIKLENKGDLSFLSKQAESKKAQQKHLPIKQLSYSTKHEIKRKGSLKSEKTVRQLLGELYVDKEYLEKLLLDEDLIKGTIKSGLTVEDLIMTGINYLDTRSNFWRQQKPIYARERDRKLMQEKWLRDRKRSPSQTAHYILKSLEDIDMLLTSGSADGSLQKAEKVLKKVLEWNQEEVPNKDELVGNLYSCIGNAQIELGQMVAALQSHRKDLEIAKEHDLPDAKSRALDNIGRVFARVGKFQQAIDTWEEKIPLAKTTLEKTWLFHEIGRCYLELDQAWQAQSYGEKSQQYAEEEGDLEWQLNASVLVAQAQVKLRDFESAVNNFEKALERAKLVHNNEAQQAIISALDDANKGIIEELKKTNYREILREKAERQDIMSQMDLQGASEKEPLRGREEQERVVKQWERDQESEREATDDEQDRKSSGGLSKKLLGDGHSSNLGIRRESREIYRRLSDYSSHLPSEDGSQKQEKKQAEAAKGEVQKLEKTKEE.

TPR repeat units lie at residues 11–44 (FPSY…QSGD), 46–78 (NCLV…DPTF), 79–112 (CKGI…RPDR), 273–309 (LKSL…NQEE), 318–351 (GNLY…AKEH), 358–391 (SRAL…AKTT), 395–428 (TWLF…AEEE), and 435–468 (LNAS…AKLV). A disordered region spans residues 511–624 (MSQMDLQGAS…VQKLEKTKEE (114 aa)). Basic and acidic residues-rich tracts occupy residues 520-557 (SEKE…DRKS), 576-588 (IRRE…RRLS), and 595-624 (PSED…TKEE).

As to quaternary structure, component of the outer dynein arm-docking complex along with ODAD1, ODAD2, and ODAD3. Interacts with ODAD1; this interaction may facilitate the recruitment and/or attachment of outer dynein arm docking complex proteins, including ODAD1, ODAD3 and ODAD2, to ciliary axonemes. Interacts with components of the IFT complex A, including IFT140, TTC21B/IFT139 and WDR19/IFT144, and the IFT complex B, including IFT46, IFT52 and IFT57. Interacts with CFAP53.

It is found in the cell projection. The protein resides in the cilium. It localises to the cytoplasm. Its subcellular location is the cytoskeleton. The protein localises to the cilium axoneme. Component of the outer dynein arm-docking complex (ODA-DC) that mediates outer dynein arms (ODA) binding onto the doublet microtubule. Plays an essential role for the assembly of ODA-DC and for the docking of ODA in ciliary axoneme. The sequence is that of Outer dynein arm-docking complex subunit 4 (Odad4) from Mus musculus (Mouse).